The following is a 119-amino-acid chain: ATP-dependent Clp protease adapter protein ClpS (119 aa).

The disordered stretch occupies residues 1–24 (MGPESPDSIPPHGPGNGDGDQDLD).

The protein belongs to the ClpS family. As to quaternary structure, binds to the N-terminal domain of the chaperone ClpA.

In terms of biological role, involved in the modulation of the specificity of the ClpAP-mediated ATP-dependent protein degradation. The sequence is that of ATP-dependent Clp protease adapter protein ClpS from Gluconobacter oxydans (strain 621H) (Gluconobacter suboxydans).